We begin with the raw amino-acid sequence, 822 residues long: Fibroblast growth factor receptor 1 (822 aa).

The N-terminal stretch at 1 to 21 is a signal peptide; the sequence is MWGWKCLLFWAVLVTATLCTA. Residues 22 to 376 lie on the Extracellular side of the membrane; sequence RPAPTLPEQA…AVMTSPLYLE (355 aa). An Ig-like C2-type 1 domain is found at 25-119; sequence PTLPEQAQPW…DTTYFSVNVS (95 aa). A disulfide bridge links C55 with C101. 2 N-linked (GlcNAc...) asparagine glycosylation sites follow: N77 and N117. Residues 120 to 162 are disordered; that stretch reads DALPSSEDDDDDDDSSSEEKETDNTKPNRRPVAPYWTSPEKME. The span at 125–135 shows a compositional bias: acidic residues; it reads SEDDDDDDDSS. A compositionally biased stretch (basic and acidic residues) spans 136 to 145; sequence SEEKETDNTK. Ig-like C2-type domains lie at 158–246 and 255–357; these read PEKM…YQLD and PILQ…AWLT. The heparin-binding stretch occupies residues 160–177; that stretch reads KMEKKLHAVPAAKTVKFK. C178 and C230 are joined by a disulfide. N227, N240, N264, N296, N317, and N330 each carry an N-linked (GlcNAc...) asparagine glycan. Cysteines 277 and 341 form a disulfide. The helical transmembrane segment at 377–397 threads the bilayer; sequence IIIYCTGAFLISCMLGSVIIY. Topologically, residues 398–822 are cytoplasmic; it reads KMKSGTKKSD…QLANSGLKRR (425 aa). Y463 is modified (phosphotyrosine; by autocatalysis). One can recognise a Protein kinase domain in the interval 478–767; that stretch reads LVLGKPLGEG…VALTSNQEYL (290 aa). ATP is bound by residues 484 to 490, K514, 562 to 564, and N568; these read LGEGCFG and EYA. A phosphotyrosine; by autocatalysis mark is found at Y583 and Y585. The active-site Proton acceptor is D623. R627 and D641 together coordinate ATP. A phosphotyrosine; by autocatalysis mark is found at Y653, Y654, Y730, and Y766. Residues 782–792 show a composition bias toward polar residues; it reads DTRSSTCSSGE. The segment at 782–822 is disordered; that stretch reads DTRSSTCSSGEDSVFSHEPLPEEPCLPRHPTQLANSGLKRR.

This sequence belongs to the protein kinase superfamily. Tyr protein kinase family. Fibroblast growth factor receptor subfamily. Monomer. Homodimer after ligand binding. Interacts predominantly with FGF1 and FGF2, but can also interact with FGF3, FGF4, FGF5, FGF6, FGF8, FGF10, FGF19, FGF21, FGF22 and FGF23 (in vitro). Ligand specificity is determined by tissue-specific expression of isoforms, and differences in the third Ig-like domain are crucial for ligand specificity. Affinity for fibroblast growth factors (FGFs) is increased by heparan sulfate glycosaminoglycans that function as coreceptors. Likewise, KLB increases the affinity for FGF19, FGF21 and FGF23. Interacts (phosphorylated on Tyr-766) with PLCG1 (via SH2 domains). Interacts with FRS2. Interacts with RPS6KA1. Interacts (via C-terminus) with NEDD4 (via WW3 domain). Interacts with KL. Interacts with SHB (via SH2 domain). Interacts with GRB10. Interacts with ANOS1; this interaction does not interfere with FGF2-binding to FGFR1, but prevents binding of heparin-bound FGF2. Interacts with SOX2 and SOX3. Interacts with FLRT1, FLRT2 and FLRT3. Found in a ternary complex with FGF1 and ITGAV:ITGB3. In terms of processing, autophosphorylated. Binding of FGF family members together with heparan sulfate proteoglycan or heparin promotes receptor dimerization and autophosphorylation on tyrosine residues. Autophosphorylation occurs in trans between the two FGFR molecules present in the dimer and proceeds in a highly ordered manner. Initial autophosphorylation at Tyr-653 increases the kinase activity by a factor of 50 to 100. After this, Tyr-583 becomes phosphorylated, followed by phosphorylation of Tyr-463, Tyr-766, Tyr-583 and Tyr-585. In a third stage, Tyr-654 is autophosphorylated, resulting in a further tenfold increase of kinase activity. Phosphotyrosine residues provide docking sites for interacting proteins and so are crucial for FGFR1 function and its regulation. Post-translationally, ubiquitinated. FGFR1 is rapidly ubiquitinated by NEDD4 after autophosphorylation, leading to internalization and lysosomal degradation. CBL is recruited to activated FGFR1 via FRS2 and GRB2, and mediates ubiquitination and subsequent degradation of FGFR1. N-glycosylated in the endoplasmic reticulum. The N-glycan chains undergo further maturation to an Endo H-resistant form in the Golgi apparatus. Widely expressed.

The protein resides in the cell membrane. It is found in the nucleus. It localises to the cytoplasm. Its subcellular location is the cytosol. The protein localises to the cytoplasmic vesicle. The catalysed reaction is L-tyrosyl-[protein] + ATP = O-phospho-L-tyrosyl-[protein] + ADP + H(+). With respect to regulation, present in an inactive conformation in the absence of bound ligand. Ligand binding leads to dimerization and activation by sequential autophosphorylation on tyrosine residues. In terms of biological role, tyrosine-protein kinase that acts as a cell-surface receptor for fibroblast growth factors and plays an essential role in the regulation of embryonic development, cell proliferation, differentiation and migration. Required for normal mesoderm patterning and correct axial organization during embryonic development, normal skeletogenesis and normal development of the gonadotropin-releasing hormone (GnRH) neuronal system. Phosphorylates PLCG1, FRS2, GAB1 and SHB. Ligand binding leads to the activation of several signaling cascades. Activation of PLCG1 leads to the production of the cellular signaling molecules diacylglycerol and inositol 1,4,5-trisphosphate. Phosphorylation of FRS2 triggers recruitment of GRB2, GAB1, PIK3R1 and SOS1, and mediates activation of RAS, MAPK1/ERK2, MAPK3/ERK1 and the MAP kinase signaling pathway, as well as of the AKT1 signaling pathway. Promotes phosphorylation of SHC1, STAT1 and PTPN11/SHP2. In the nucleus, enhances RPS6KA1 and CREB1 activity and contributes to the regulation of transcription. FGFR1 signaling is down-regulated by IL17RD/SEF, and by FGFR1 ubiquitination, internalization and degradation. In Mus musculus (Mouse), this protein is Fibroblast growth factor receptor 1 (Fgfr1).